A 288-amino-acid chain; its full sequence is Light-independent protochlorophyllide reductase iron-sulfur ATP-binding protein (288 aa).

Residues 10-15 and Lys-39 each bind ATP; that span reads GIGKST. Ser-14 contacts Mg(2+). [4Fe-4S] cluster contacts are provided by Cys-95 and Cys-129. ATP-binding positions include 180 to 181 and 204 to 206; these read NR and PLL.

It belongs to the NifH/BchL/ChlL family. As to quaternary structure, homodimer. Protochlorophyllide reductase is composed of three subunits; ChlL, ChlN and ChlB. [4Fe-4S] cluster is required as a cofactor.

It localises to the plastid. Its subcellular location is the chloroplast. The enzyme catalyses chlorophyllide a + oxidized 2[4Fe-4S]-[ferredoxin] + 2 ADP + 2 phosphate = protochlorophyllide a + reduced 2[4Fe-4S]-[ferredoxin] + 2 ATP + 2 H2O. Its pathway is porphyrin-containing compound metabolism; chlorophyll biosynthesis (light-independent). Functionally, component of the dark-operative protochlorophyllide reductase (DPOR) that uses Mg-ATP and reduced ferredoxin to reduce ring D of protochlorophyllide (Pchlide) to form chlorophyllide a (Chlide). This reaction is light-independent. The L component serves as a unique electron donor to the NB-component of the complex, and binds Mg-ATP. The sequence is that of Light-independent protochlorophyllide reductase iron-sulfur ATP-binding protein from Stigeoclonium helveticum (Green alga).